A 234-amino-acid chain; its full sequence is Carboxy-S-adenosyl-L-methionine synthase (234 aa).

S-adenosyl-L-methionine-binding positions include Tyr35, 60 to 62 (GSS), 83 to 84 (DN), Asn124, and Arg191.

Belongs to the class I-like SAM-binding methyltransferase superfamily. Cx-SAM synthase family. Homodimer.

The catalysed reaction is prephenate + S-adenosyl-L-methionine = carboxy-S-adenosyl-L-methionine + 3-phenylpyruvate + H2O. Catalyzes the conversion of S-adenosyl-L-methionine (SAM) to carboxy-S-adenosyl-L-methionine (Cx-SAM). This is Carboxy-S-adenosyl-L-methionine synthase from Nautilia profundicola (strain ATCC BAA-1463 / DSM 18972 / AmH).